We begin with the raw amino-acid sequence, 203 residues long: Recombination protein RecR (203 aa).

The C4-type zinc-finger motif lies at 56-71 (CAVCGNVSDDERCRIC). A Toprim domain is found at 79 to 179 (ALVCVVEEPK…TVTRIASGLP (101 aa)).

This sequence belongs to the RecR family.

In terms of biological role, may play a role in DNA repair. It seems to be involved in an RecBC-independent recombinational process of DNA repair. It may act with RecF and RecO. This is Recombination protein RecR from Mycobacterium ulcerans (strain Agy99).